The sequence spans 501 residues: Glutamyl-tRNA(Gln) amidotransferase subunit A (501 aa).

Catalysis depends on charge relay system residues Lys-84 and Ser-159. Ser-183 serves as the catalytic Acyl-ester intermediate.

It belongs to the amidase family. GatA subfamily. Heterotrimer of A, B and C subunits.

The enzyme catalyses L-glutamyl-tRNA(Gln) + L-glutamine + ATP + H2O = L-glutaminyl-tRNA(Gln) + L-glutamate + ADP + phosphate + H(+). Allows the formation of correctly charged Gln-tRNA(Gln) through the transamidation of misacylated Glu-tRNA(Gln) in organisms which lack glutaminyl-tRNA synthetase. The reaction takes place in the presence of glutamine and ATP through an activated gamma-phospho-Glu-tRNA(Gln). In Streptomyces avermitilis (strain ATCC 31267 / DSM 46492 / JCM 5070 / NBRC 14893 / NCIMB 12804 / NRRL 8165 / MA-4680), this protein is Glutamyl-tRNA(Gln) amidotransferase subunit A.